The chain runs to 424 residues: Kynureninase (424 aa).

Pyridoxal 5'-phosphate-binding positions include Leu-106, Thr-107, 134 to 137 (FPSD), Asp-219, His-222, and Tyr-244. Lys-245 carries the post-translational modification N6-(pyridoxal phosphate)lysine. Pyridoxal 5'-phosphate contacts are provided by Trp-274 and Asn-302.

The protein belongs to the kynureninase family. As to quaternary structure, homodimer. The cofactor is pyridoxal 5'-phosphate.

It catalyses the reaction L-kynurenine + H2O = anthranilate + L-alanine + H(+). The catalysed reaction is 3-hydroxy-L-kynurenine + H2O = 3-hydroxyanthranilate + L-alanine + H(+). The protein operates within amino-acid degradation; L-kynurenine degradation; L-alanine and anthranilate from L-kynurenine: step 1/1. It participates in cofactor biosynthesis; NAD(+) biosynthesis; quinolinate from L-kynurenine: step 2/3. Functionally, catalyzes the cleavage of L-kynurenine (L-Kyn) and L-3-hydroxykynurenine (L-3OHKyn) into anthranilic acid (AA) and 3-hydroxyanthranilic acid (3-OHAA), respectively. In Xanthomonas campestris pv. campestris (strain 8004), this protein is Kynureninase.